The following is a 451-amino-acid chain: Adenylyltransferase and sulfurtransferase MOCS3 (451 aa).

Thr-60 carries the post-translational modification Phosphothreonine. Residues Gly-99, Asp-120, 127 to 131, Lys-144, and 188 to 189 contribute to the ATP site; these read SNFHR and DN. 2 residues coordinate Zn(2+): Cys-229 and Cys-232. Cys-246 serves as the catalytic Glycyl thioester intermediate; for adenylyltransferase activity. Zn(2+)-binding residues include Cys-304 and Cys-307. The 97-residue stretch at 353 to 449 folds into the Rhodanese domain; that stretch reads QQQPHLLIDV…WTHKVDPSFP (97 aa). The active-site Cysteine persulfide intermediate; for sulfurtransferase activity is the Cys-408.

It in the N-terminal section; belongs to the HesA/MoeB/ThiF family. UBA4 subfamily. Zn(2+) is required as a cofactor.

Its subcellular location is the cytoplasm. It is found in the cytosol. It carries out the reaction [molybdopterin-synthase sulfur-carrier protein]-C-terminal Gly-Gly + ATP + H(+) = [molybdopterin-synthase sulfur-carrier protein]-C-terminal Gly-Gly-AMP + diphosphate. It catalyses the reaction [molybdopterin-synthase sulfur-carrier protein]-C-terminal Gly-Gly-AMP + S-sulfanyl-L-cysteinyl-[cysteine desulfurase] + AH2 = [molybdopterin-synthase sulfur-carrier protein]-C-terminal-Gly-aminoethanethioate + L-cysteinyl-[cysteine desulfurase] + A + AMP + 2 H(+). It participates in tRNA modification; 5-methoxycarbonylmethyl-2-thiouridine-tRNA biosynthesis. The protein operates within cofactor biosynthesis; molybdopterin biosynthesis. In terms of biological role, plays a central role in 2-thiolation of mcm(5)S(2)U at tRNA wobble positions of cytosolic tRNA(Lys), tRNA(Glu) and tRNA(Gln). Also essential during biosynthesis of the molybdenum cofactor. Acts by mediating the C-terminal thiocarboxylation of sulfur carriers URM1 and MOCS2A. Its N-terminus first activates URM1 and MOCS2A as acyl-adenylates (-COAMP), then the persulfide sulfur on the catalytic cysteine is transferred to URM1 and MOCS2A to form thiocarboxylation (-COSH) of their C-terminus. The reaction probably involves hydrogen sulfide that is generated from the persulfide intermediate and that acts as a nucleophile towards URM1 and MOCS2A. Subsequently, a transient disulfide bond is formed. Does not use thiosulfate as sulfur donor; NFS1 probably acting as a sulfur donor for thiocarboxylation reactions. This is Adenylyltransferase and sulfurtransferase MOCS3 from Drosophila ananassae (Fruit fly).